A 126-amino-acid polypeptide reads, in one-letter code: Alpha-lactalbumin (126 aa).

The C-type lysozyme domain maps to 1–126 (KVFEKCELSQ…CIADLDQWKC (126 aa)). Cystine bridges form between Cys-6–Cys-126, Cys-30–Cys-117, Cys-63–Cys-82, and Cys-78–Cys-96. An N-linked (GlcNAc...) asparagine glycan is attached at Asn-47. Lys-84, Asp-87, Asp-89, Asp-92, and Asp-93 together coordinate Ca(2+).

The protein belongs to the glycosyl hydrolase 22 family. In terms of assembly, lactose synthase (LS) is a heterodimer of a catalytic component, beta1,4-galactosyltransferase (beta4Gal-T1) and a regulatory component, alpha-lactalbumin (LA). As to expression, mammary gland specific. Secreted in milk.

The protein localises to the secreted. Functionally, regulatory subunit of lactose synthase, changes the substrate specificity of galactosyltransferase in the mammary gland making glucose a good acceptor substrate for this enzyme. This enables LS to synthesize lactose, the major carbohydrate component of milk. In other tissues, galactosyltransferase transfers galactose onto the N-acetylglucosamine of the oligosaccharide chains in glycoproteins. This is Alpha-lactalbumin (LALBA) from Tachyglossus aculeatus aculeatus (Southeast Australian short-beaked echidna).